A 198-amino-acid polypeptide reads, in one-letter code: Probable GTP-binding protein EngB (198 aa).

The 175-residue stretch at 21-195 (NFSEVAFLGR…EDIIINQTLG (175 aa)) folds into the EngB-type G domain. GTP contacts are provided by residues 29–36 (GRSNVGKS), 56–60 (GKTQL), 81–84 (DLPG), 151–154 (TKCD), and 174–176 (VSN). Mg(2+) contacts are provided by Ser36 and Thr58.

The protein belongs to the TRAFAC class TrmE-Era-EngA-EngB-Septin-like GTPase superfamily. EngB GTPase family. Mg(2+) serves as cofactor.

Functionally, necessary for normal cell division and for the maintenance of normal septation. The sequence is that of Probable GTP-binding protein EngB from Campylobacter jejuni subsp. jejuni serotype O:2 (strain ATCC 700819 / NCTC 11168).